The following is a 311-amino-acid chain: tRNA-cytidine(32) 2-sulfurtransferase (311 aa).

Residues 47–52 carry the PP-loop motif motif; it reads SGGKDS. The [4Fe-4S] cluster site is built by cysteine 122, cysteine 125, and cysteine 213.

Belongs to the TtcA family. In terms of assembly, homodimer. Requires Mg(2+) as cofactor. [4Fe-4S] cluster serves as cofactor.

It is found in the cytoplasm. It carries out the reaction cytidine(32) in tRNA + S-sulfanyl-L-cysteinyl-[cysteine desulfurase] + AH2 + ATP = 2-thiocytidine(32) in tRNA + L-cysteinyl-[cysteine desulfurase] + A + AMP + diphosphate + H(+). Its pathway is tRNA modification. In terms of biological role, catalyzes the ATP-dependent 2-thiolation of cytidine in position 32 of tRNA, to form 2-thiocytidine (s(2)C32). The sulfur atoms are provided by the cysteine/cysteine desulfurase (IscS) system. This chain is tRNA-cytidine(32) 2-sulfurtransferase, found in Escherichia fergusonii (strain ATCC 35469 / DSM 13698 / CCUG 18766 / IAM 14443 / JCM 21226 / LMG 7866 / NBRC 102419 / NCTC 12128 / CDC 0568-73).